The primary structure comprises 392 residues: N-acetylneuraminate epimerase (392 aa).

The signal sequence occupies residues 1–35 (MTQIYHQYKKKLSTKVILLSALTLCITFSLPYANA). Kelch repeat units lie at residues 56-100 (HLYV…VALS), 102-155 (KLYV…TTLN), 157-192 (TQAL…AVVN), 193-238 (AYFD…TAKK), 241-290 (LILI…LAGA), 312-361 (QQFN…QDKD), and 363-392 (VILL…LHLE). Catalysis depends on glutamate 247, which acts as the Proton acceptor.

This sequence belongs to the NanM family. In terms of assembly, homodimer.

It localises to the periplasm. The enzyme catalyses N-acetyl-alpha-neuraminate = N-acetyl-beta-neuraminate. Converts alpha-N-acetylneuranimic acid (Neu5Ac) to the beta-anomer, accelerating the equilibrium between the alpha- and beta-anomers. Probably facilitates sialidase-negative bacteria to compete successfully for limited amounts of extracellular Neu5Ac, which is likely taken up in the beta-anomer. In addition, the rapid removal of sialic acid from solution might be advantageous to the bacterium to damp down host responses. This Yersinia enterocolitica serotype O:8 / biotype 1B (strain NCTC 13174 / 8081) protein is N-acetylneuraminate epimerase.